The chain runs to 359 residues: DNA polymerase IV (359 aa).

The UmuC domain occupies 4 to 184 (IVHVDMDAFY…LKVNRIPGVG (181 aa)). Mg(2+) contacts are provided by Asp-8 and Asp-102. Glu-103 is an active-site residue.

It belongs to the DNA polymerase type-Y family. In terms of assembly, monomer. Mg(2+) is required as a cofactor.

It localises to the cytoplasm. It carries out the reaction DNA(n) + a 2'-deoxyribonucleoside 5'-triphosphate = DNA(n+1) + diphosphate. In terms of biological role, poorly processive, error-prone DNA polymerase involved in untargeted mutagenesis. Copies undamaged DNA at stalled replication forks, which arise in vivo from mismatched or misaligned primer ends. These misaligned primers can be extended by PolIV. Exhibits no 3'-5' exonuclease (proofreading) activity. May be involved in translesional synthesis, in conjunction with the beta clamp from PolIII. The chain is DNA polymerase IV from Xanthomonas axonopodis pv. citri (strain 306).